The primary structure comprises 155 residues: Small ribosomal subunit protein uS7cz/uS7cy (155 aa).

Belongs to the universal ribosomal protein uS7 family. As to quaternary structure, part of the 30S ribosomal subunit.

It localises to the plastid. Its subcellular location is the chloroplast. In terms of biological role, one of the primary rRNA binding proteins, it binds directly to 16S rRNA where it nucleates assembly of the head domain of the 30S subunit. In Nymphaea alba (White water-lily), this protein is Small ribosomal subunit protein uS7cz/uS7cy (rps7-A).